Consider the following 974-residue polypeptide: Glycine dehydrogenase (decarboxylating) (974 aa).

Position 720 is an N6-(pyridoxal phosphate)lysine (lysine 720).

Belongs to the GcvP family. The glycine cleavage system is composed of four proteins: P, T, L and H. Requires pyridoxal 5'-phosphate as cofactor.

The enzyme catalyses N(6)-[(R)-lipoyl]-L-lysyl-[glycine-cleavage complex H protein] + glycine + H(+) = N(6)-[(R)-S(8)-aminomethyldihydrolipoyl]-L-lysyl-[glycine-cleavage complex H protein] + CO2. Functionally, the glycine cleavage system catalyzes the degradation of glycine. The P protein binds the alpha-amino group of glycine through its pyridoxal phosphate cofactor; CO(2) is released and the remaining methylamine moiety is then transferred to the lipoamide cofactor of the H protein. The sequence is that of Glycine dehydrogenase (decarboxylating) from Cupriavidus metallidurans (strain ATCC 43123 / DSM 2839 / NBRC 102507 / CH34) (Ralstonia metallidurans).